Consider the following 71-residue polypeptide: uncharacterized protein (71 aa).

This is an uncharacterized protein from Archaeoglobus fulgidus (strain ATCC 49558 / DSM 4304 / JCM 9628 / NBRC 100126 / VC-16).